The following is a 318-amino-acid chain: Pheromone-regulated membrane protein 5 (318 aa).

A helical transmembrane segment spans residues 75–98; sequence GTVFIVVGGIAGVIFLAILLWWVI. A Phosphoserine modification is found at S129. Over residues 238 to 247 the composition is skewed to low complexity; the sequence is TISSSSASSL. The segment at 238–318 is disordered; sequence TISSSSASSL…HMLEGKEQDE (81 aa). The span at 250–261 shows a compositional bias: basic and acidic residues; sequence GNEKEVGEDIRK. The segment covering 276–285 has biased composition (polar residues); that stretch reads SPESDGSVNR. Residues S279, S282, and S288 each carry the phosphoserine modification. The span at 309-318 shows a compositional bias: basic and acidic residues; it reads HMLEGKEQDE. Residue K314 forms a Glycyl lysine isopeptide (Lys-Gly) (interchain with G-Cter in ubiquitin) linkage.

This sequence belongs to the PRM5 family.

It localises to the membrane. This Saccharomyces cerevisiae (strain ATCC 204508 / S288c) (Baker's yeast) protein is Pheromone-regulated membrane protein 5 (PRM5).